Consider the following 132-residue polypeptide: Small ribosomal subunit protein uS8 (132 aa).

The protein belongs to the universal ribosomal protein uS8 family. As to quaternary structure, part of the 30S ribosomal subunit. Contacts proteins S5 and S12.

Its function is as follows. One of the primary rRNA binding proteins, it binds directly to 16S rRNA central domain where it helps coordinate assembly of the platform of the 30S subunit. This chain is Small ribosomal subunit protein uS8, found in Borrelia turicatae (strain 91E135).